The primary structure comprises 80 residues: Acyl carrier protein (80 aa).

Positions 4–79 (DEIFSKVRSI…DVVNFIKKRK (76 aa)) constitute a Carrier domain. An O-(pantetheine 4'-phosphoryl)serine modification is found at Ser39.

This sequence belongs to the acyl carrier protein (ACP) family. Post-translationally, 4'-phosphopantetheine is transferred from CoA to a specific serine of apo-ACP by AcpS. This modification is essential for activity because fatty acids are bound in thioester linkage to the sulfhydryl of the prosthetic group.

Its subcellular location is the cytoplasm. It participates in lipid metabolism; fatty acid biosynthesis. Its function is as follows. Carrier of the growing fatty acid chain in fatty acid biosynthesis. In Borrelia garinii subsp. bavariensis (strain ATCC BAA-2496 / DSM 23469 / PBi) (Borreliella bavariensis), this protein is Acyl carrier protein.